We begin with the raw amino-acid sequence, 440 residues long: NADH-quinone oxidoreductase subunit D (440 aa).

This sequence belongs to the complex I 49 kDa subunit family. NDH-1 is composed of 14 different subunits. Subunits NuoB, C, D, E, F, and G constitute the peripheral sector of the complex.

The protein resides in the cell membrane. It catalyses the reaction a quinone + NADH + 5 H(+)(in) = a quinol + NAD(+) + 4 H(+)(out). Functionally, NDH-1 shuttles electrons from NADH, via FMN and iron-sulfur (Fe-S) centers, to quinones in the respiratory chain. The immediate electron acceptor for the enzyme in this species is believed to be a menaquinone. Couples the redox reaction to proton translocation (for every two electrons transferred, four hydrogen ions are translocated across the cytoplasmic membrane), and thus conserves the redox energy in a proton gradient. This chain is NADH-quinone oxidoreductase subunit D, found in Acidothermus cellulolyticus (strain ATCC 43068 / DSM 8971 / 11B).